We begin with the raw amino-acid sequence, 178 residues long: Large ribosomal subunit protein uL5 (178 aa).

It belongs to the universal ribosomal protein uL5 family. Part of the 50S ribosomal subunit; part of the 5S rRNA/L5/L18/L25 subcomplex. Contacts the 5S rRNA and the P site tRNA. Forms a bridge to the 30S subunit in the 70S ribosome.

Functionally, this is one of the proteins that bind and probably mediate the attachment of the 5S RNA into the large ribosomal subunit, where it forms part of the central protuberance. In the 70S ribosome it contacts protein S13 of the 30S subunit (bridge B1b), connecting the 2 subunits; this bridge is implicated in subunit movement. Contacts the P site tRNA; the 5S rRNA and some of its associated proteins might help stabilize positioning of ribosome-bound tRNAs. The protein is Large ribosomal subunit protein uL5 of Prochlorococcus marinus subsp. pastoris (strain CCMP1986 / NIES-2087 / MED4).